Consider the following 158-residue polypeptide: Protein GLUTAMINE DUMPER 1 (158 aa).

Residues 1–36 (MRPLSVQSKFEDVATSTSVNHHGVTPQSPWHSPVPY) are Extracellular-facing. Residues 37-57 (LFGGLAAMLGLIAFALLILAC) traverse the membrane as a helical segment. Residues 58-158 (SYWRLSSSGE…DTGETTTTSH (101 aa)) lie on the Cytoplasmic side of the membrane. The disordered stretch occupies residues 65-85 (SGEEDGQNVDEEKESRSGDKA). Acidic residues predominate over residues 66–76 (GEEDGQNVDEE). A VIMAG motif is present at residues 96 to 100 (VIMAG). Residues 126–158 (ISQEESVAKEEEKMREGEEEKVKDTGETTTTSH) are disordered. The segment covering 131-151 (SVAKEEEKMREGEEEKVKDTG) has biased composition (basic and acidic residues).

It belongs to the GLUTAMINE DUMPER 1 (TC 9.B.60) family. As to quaternary structure, interacts with LOG2. In terms of processing, ubiquitinated by LOG2 (in vitro). In terms of tissue distribution, expressed in the vascular tissues and in hydathodes. Expressed in the phloem and xylem (at the protein level).

Its subcellular location is the cell membrane. In terms of biological role, probable subunit of an amino acid transporter involved in the regulation of the amino acid metabolism. Stimulates amino acid export by activating nonselective amino acid facilitators. Required the interaction with the RING-type E3 ubiquitin-protein ligase LOG2 to fulfill its function. Plays a role in the Gln export at hydathodes, at xylem parenchyma into xylem sap and from mesophyll into leaf apoplasm. Acts upstream genes involved in the salicylic acid (SA) pathway and in the geminivirus-host interaction. The chain is Protein GLUTAMINE DUMPER 1 (GDU1) from Arabidopsis thaliana (Mouse-ear cress).